The primary structure comprises 280 residues: Acyl-[acyl-carrier-protein]--UDP-N-acetylglucosamine O-acyltransferase (280 aa).

The protein belongs to the transferase hexapeptide repeat family. LpxA subfamily. As to quaternary structure, homotrimer.

Its subcellular location is the cytoplasm. The enzyme catalyses a (3R)-hydroxyacyl-[ACP] + UDP-N-acetyl-alpha-D-glucosamine = a UDP-3-O-[(3R)-3-hydroxyacyl]-N-acetyl-alpha-D-glucosamine + holo-[ACP]. Its pathway is glycolipid biosynthesis; lipid IV(A) biosynthesis; lipid IV(A) from (3R)-3-hydroxytetradecanoyl-[acyl-carrier-protein] and UDP-N-acetyl-alpha-D-glucosamine: step 1/6. Its function is as follows. Involved in the biosynthesis of lipid A, a phosphorylated glycolipid that anchors the lipopolysaccharide to the outer membrane of the cell. The polypeptide is Acyl-[acyl-carrier-protein]--UDP-N-acetylglucosamine O-acyltransferase (Chlamydia muridarum (strain MoPn / Nigg)).